Reading from the N-terminus, the 403-residue chain is Methylthioribose-1-phosphate isomerase (403 aa).

Asp277 (proton donor) is an active-site residue.

It belongs to the eIF-2B alpha/beta/delta subunits family. MtnA subfamily.

The protein localises to the cytoplasm. The protein resides in the nucleus. It catalyses the reaction 5-(methylsulfanyl)-alpha-D-ribose 1-phosphate = 5-(methylsulfanyl)-D-ribulose 1-phosphate. It participates in amino-acid biosynthesis; L-methionine biosynthesis via salvage pathway; L-methionine from S-methyl-5-thio-alpha-D-ribose 1-phosphate: step 1/6. Catalyzes the interconversion of methylthioribose-1-phosphate (MTR-1-P) into methylthioribulose-1-phosphate (MTRu-1-P). In Lodderomyces elongisporus (strain ATCC 11503 / CBS 2605 / JCM 1781 / NBRC 1676 / NRRL YB-4239) (Yeast), this protein is Methylthioribose-1-phosphate isomerase.